Here is a 475-residue protein sequence, read N- to C-terminus: Ribulose bisphosphate carboxylase large chain (475 aa).

Positions methionine 1–serine 2 are excised as a propeptide. Proline 3 carries the post-translational modification N-acetylproline. An N6,N6,N6-trimethyllysine modification is found at lysine 14. Positions 123 and 173 each coordinate substrate. The active-site Proton acceptor is the lysine 175. Lysine 177 provides a ligand contact to substrate. 3 residues coordinate Mg(2+): lysine 201, aspartate 203, and glutamate 204. Position 201 is an N6-carboxylysine (lysine 201). Residue histidine 294 is the Proton acceptor of the active site. Substrate is bound by residues arginine 295, histidine 327, and serine 379.

This sequence belongs to the RuBisCO large chain family. Type I subfamily. Heterohexadecamer of 8 large chains and 8 small chains; disulfide-linked. The disulfide link is formed within the large subunit homodimers. Requires Mg(2+) as cofactor. Post-translationally, the disulfide bond which can form in the large chain dimeric partners within the hexadecamer appears to be associated with oxidative stress and protein turnover.

The protein localises to the plastid. Its subcellular location is the chloroplast. It carries out the reaction 2 (2R)-3-phosphoglycerate + 2 H(+) = D-ribulose 1,5-bisphosphate + CO2 + H2O. It catalyses the reaction D-ribulose 1,5-bisphosphate + O2 = 2-phosphoglycolate + (2R)-3-phosphoglycerate + 2 H(+). In terms of biological role, ruBisCO catalyzes two reactions: the carboxylation of D-ribulose 1,5-bisphosphate, the primary event in carbon dioxide fixation, as well as the oxidative fragmentation of the pentose substrate in the photorespiration process. Both reactions occur simultaneously and in competition at the same active site. This is Ribulose bisphosphate carboxylase large chain from Calycanthus floridus var. glaucus (Eastern sweetshrub).